A 310-amino-acid chain; its full sequence is D-erythrulose 1-phosphate 3-epimerase (310 aa).

It carries out the reaction D-erythrulose 1-phosphate = L-erythrulose 1-phosphate. It functions in the pathway carbohydrate metabolism; erythritol degradation. Catalyzes the racemization of D-erythrulose 1-phosphate to L-erythrulose 1-phosphate. This is D-erythrulose 1-phosphate 3-epimerase from Brucella abortus (strain 2308).